The chain runs to 340 residues: Dihydroorotate dehydrogenase (quinone) (340 aa).

Residues 61-65 and Thr85 each bind FMN; that span reads AGLDK. Lys65 is a substrate binding site. 110–114 contacts substrate; the sequence is NRMGF. Residues Asn138 and Asn171 each contribute to the FMN site. Residue Asn171 participates in substrate binding. Ser174 functions as the Nucleophile in the catalytic mechanism. Position 176 (Asn176) interacts with substrate. Residues Lys216 and Thr244 each coordinate FMN. 245–246 contributes to the substrate binding site; that stretch reads NT. FMN-binding positions include Gly267, Gly296, and 317–318; that span reads YS.

This sequence belongs to the dihydroorotate dehydrogenase family. Type 2 subfamily. In terms of assembly, monomer. It depends on FMN as a cofactor.

It is found in the cell membrane. The enzyme catalyses (S)-dihydroorotate + a quinone = orotate + a quinol. The protein operates within pyrimidine metabolism; UMP biosynthesis via de novo pathway; orotate from (S)-dihydroorotate (quinone route): step 1/1. Its function is as follows. Catalyzes the conversion of dihydroorotate to orotate with quinone as electron acceptor. The sequence is that of Dihydroorotate dehydrogenase (quinone) from Pseudomonas putida (strain ATCC 47054 / DSM 6125 / CFBP 8728 / NCIMB 11950 / KT2440).